The following is an 87-amino-acid chain: Omega-lycotoxin-Am1c (87 aa).

The first 17 residues, methionine 1–cysteine 17, serve as a signal peptide directing secretion. The propeptide occupies glutamine 18–arginine 40. Intrachain disulfides connect cysteine 44-cysteine 59, cysteine 51-cysteine 64, cysteine 58-cysteine 84, and cysteine 66-cysteine 82.

The protein belongs to the neurotoxin omega-lctx family. In terms of tissue distribution, expressed by the venom gland.

Its subcellular location is the secreted. Modulates Cav2.1/CACNA1A voltage-gated calcium channels (P/Q-type currents) in rat cerebellar Purkinje cells and hippocampal CA1-CA3 neurons. At saturating concentrations (&gt;10 nM) decelerates activation kinetics and slightly increases peak amplitude without affecting deactivation kinetics. In vivo, does not cause death when intravenously injected into mice. In rat models, through its activity on Cav2.1/CACNA1A, has an ameliorative effect on memory defects provoked by hyperstimulation of N-methyl-D-aspartate receptors (NMDARs) in the hippocampus. The protein is Omega-lycotoxin-Am1c of Alopecosa marikovskyi (Wolf spider).